The primary structure comprises 318 residues: Galactofuranose-binding protein YtfQ (318 aa).

Residues 1 to 21 (MWKRLLIVSAVSAAMSSMALA) form the signal peptide. Beta-D-galactofuranose contacts are provided by residues 34 to 38 (ESGWR), 111 to 112 (DR), arginine 167, asparagine 220, and aspartate 248. An intrachain disulfide couples cysteine 150 to cysteine 214.

Belongs to the bacterial solute-binding protein 2 family. In terms of assembly, the complex is composed of two ATP-binding proteins (YtfR), two transmembrane proteins (YtfT and YjfF) and a solute-binding protein (YtfQ).

It is found in the periplasm. Functionally, part of the ABC transporter complex YtfQRT-YjfF involved in galactofuranose transport. Binds to both alpha- and beta-galactofuranose. In Escherichia coli (strain K12), this protein is Galactofuranose-binding protein YtfQ (ytfQ).